Here is a 28-residue protein sequence, read N- to C-terminus: M-ectatotoxin-Eb2c (28 aa).

As to expression, expressed by the venom gland.

It is found in the secreted. Functionally, antimicrobial peptide active against Gram-negative bacterium E.coli MH1 (MIC=3.5 uM) and P.aeruginosa PAO1 (MIC=10 uM) and against Gram-positive bacterium A.globiformis VKM Ac-1112 (MIC=1.25 uM). The sequence is that of M-ectatotoxin-Eb2c from Ectatomma brunneum (Ant).